Reading from the N-terminus, the 682-residue chain is uncharacterized protein (682 aa).

The MCM domain occupies 284–487; sequence VVNILADRLI…KDKDIAEYIV (204 aa). 329-336 is a binding site for ATP; that stretch reads TDPGIGKT.

This sequence belongs to the MCM family.

This is an uncharacterized protein from Methanocaldococcus jannaschii (strain ATCC 43067 / DSM 2661 / JAL-1 / JCM 10045 / NBRC 100440) (Methanococcus jannaschii).